Consider the following 511-residue polypeptide: Maturase K (511 aa).

The protein belongs to the intron maturase 2 family. MatK subfamily.

It is found in the plastid. Its subcellular location is the chloroplast. In terms of biological role, usually encoded in the trnK tRNA gene intron. Probably assists in splicing its own and other chloroplast group II introns. The sequence is that of Maturase K from Bowiea volubilis (Climbing onion).